The following is a 145-amino-acid chain: Meiotically up-regulated gene 124 protein (145 aa).

A run of 2 helical transmembrane segments spans residues 18 to 38 and 95 to 115; these read IILT…CPSI and FAWS…NFFL.

Its subcellular location is the membrane. Functionally, has a role in meiosis. The sequence is that of Meiotically up-regulated gene 124 protein (mug124) from Schizosaccharomyces pombe (strain 972 / ATCC 24843) (Fission yeast).